The primary structure comprises 347 residues: MEFCVLFGGASFEHEISIVSAIALKEVLKDRIKHFIFLDENHHFYLIEASNMHSKYFAQIKEKKLPPLILAHNGLLKNSFLGTKIIELPLVINLVHGGDGEDGKLASLLEFYRIAFIGPRIEASVLSYNKYLTKLYAKDLGVKTLDYVLLNEKNRANALDLIKFNFPFIVKPSNAGSSLGVNVVKEEKELVYALDSAFEYSKEVLIEPFIQGVKEYNLAGCKIKTDFCFSYIEEPNKQEFLDFKQKYLDFSRNKAPKANLSNALEEQLKENFKKLYNDLFSGAIIRCDFFVIENEVYLNEINPIPGSLAHYLFDDFKTTLENLAQSLPKTPKIQVKNSYLLQIQKNK.

The 199-residue stretch at 134–332 folds into the ATP-grasp domain; it reads KLYAKDLGVK…LAQSLPKTPK (199 aa). ATP is bound at residue 161 to 216; it reads LIKFNFPFIVKPSNAGSSLGVNVVKEEKELVYALDSAFEYSKEVLIEPFIQGVKEY. Positions 288, 300, and 302 each coordinate Mg(2+).

Belongs to the D-alanine--D-alanine ligase family. The cofactor is Mg(2+). Mn(2+) is required as a cofactor.

It is found in the cytoplasm. It catalyses the reaction 2 D-alanine + ATP = D-alanyl-D-alanine + ADP + phosphate + H(+). Its pathway is cell wall biogenesis; peptidoglycan biosynthesis. Functionally, cell wall formation. The sequence is that of D-alanine--D-alanine ligase from Helicobacter pylori (strain P12).